Consider the following 685-residue polypeptide: Nucleolar protein 4 (685 aa).

A disordered region spans residues 1–21; sequence MEETIENVEVPSSNVSKQNDD. One can recognise an RRM 1 domain in the interval 26–103; it reads KTLFVRSIPQ…HILRVDIAKR (78 aa). Residues 106–123 show a composition bias toward basic and acidic residues; that stretch reads RSKKTSEVVEKSTPESSE. The tract at residues 106-142 is disordered; it reads RSKKTSEVVEKSTPESSEKITGQNNEDEDDADGEDSM. Over residues 130–140 the composition is skewed to acidic residues; that stretch reads NEDEDDADGED. Residues 147-225 form the RRM 2 domain; that stretch reads PKLIIRNMPW…RKVAVDFAVQ (79 aa). Residues 231-242 show a composition bias toward basic and acidic residues; it reads DYKKAQPEMNDK. Residues 231-285 are disordered; the sequence is DYKKAQPEMNDKDDNESGNEDAEENHDDEEDENEEEDRQVDQASKNKESKRKAQN. Positions 243 to 268 are enriched in acidic residues; it reads DDNESGNEDAEENHDDEEDENEEEDR. A Phosphoserine modification is found at S247. RRM domains follow at residues 290–383 and 462–612; these read FSVF…PTLV and TRLA…FAIE. T379 is subject to Phosphothreonine. A compositionally biased stretch (basic residues) spans 622–631; that stretch reads EQLKQARTKR. Residues 622–685 are disordered; sequence EQLKQARTKR…FKRKRKHAKK (64 aa). A compositionally biased stretch (basic and acidic residues) spans 645–672; it reads SENKKPKKEEATTPTNPDDKKMGDDIKR. The segment covering 674-685 has biased composition (basic residues); sequence IGFKRKRKHAKK.

Interacts with NOP1.

The protein localises to the nucleus. Its subcellular location is the nucleolus. In terms of biological role, required for 60S ribosomal subunit synthesis. Probably involved in the processing of 27S rRNA to produce mature 25S rRNA. The protein is Nucleolar protein 4 (NOP4) of Saccharomyces cerevisiae (strain ATCC 204508 / S288c) (Baker's yeast).